The chain runs to 156 residues: uncharacterized protein (156 aa).

The N-acetyltransferase domain maps to 10–156 (VAARTFPLAC…NDYVMVRELV (147 aa)).

It belongs to the acetyltransferase family.

This is an uncharacterized protein from Mycobacterium bovis (strain ATCC BAA-935 / AF2122/97).